The primary structure comprises 326 residues: MSDLQAAEGPGSWSPTARPGSAGGVGDCQGVEGSQAAASENEDLENNKDTSLLASATDPEPCSPPHRPQMVSPGSKDATEDLRKATGALEAQALVKQDLLPADQAQVLNEMAKYQVPQRSGDIVMIQSEHTGAIDVLSADLESADLLGDHRKVSPPLMAPPCIWTFAKVKEFKSKLGKEKNSRLVVKRGEVVTIRVPTHPEGKRVCWEFATDDYDIGFGVYFDWTPVTSTDITVQVSDSCDDEDEEEEEEEEIEEPVPAGDVERGSRSSLRGRYGEVMPVYRRDSHRDVQAGSHDYPGEGIYLLKFDNSYSLLRNKTLYFHIYYTS.

Positions 1–80 (MSDLQAAEGP…VSPGSKDATE (80 aa)) are disordered. The 165-residue stretch at 160–324 (PPCIWTFAKV…NKTLYFHIYY (165 aa)) folds into the GOLD domain. Position 170 is an N6-acetyllysine (lysine 170). The interval 238-268 (DSCDDEDEEEEEEEEIEEPVPAGDVERGSRS) is disordered. Residues 239 to 255 (SCDDEDEEEEEEEEIEE) are compositionally biased toward acidic residues.

The chain is Protein TMED8 (TMED8) from Pongo abelii (Sumatran orangutan).